The chain runs to 260 residues: Large ribosomal subunit protein eL8A (260 aa).

Positions 1–34 are disordered; that stretch reads MPSSKKVAPAPLATKSKASTSTKNPLFESTPKNF.

It belongs to the eukaryotic ribosomal protein eL8 family. As to quaternary structure, component of the large ribosomal subunit. Mature ribosomes consist of a small (40S) and a large (60S) subunit. The 40S subunit contains about 32 different proteins and 1 molecule of RNA (18S). The 60S subunit contains 45 different proteins and 3 molecules of RNA (25S, 5.8S and 5S).

It localises to the cytoplasm. In terms of biological role, component of the ribosome, a large ribonucleoprotein complex responsible for the synthesis of proteins in the cell. The small ribosomal subunit (SSU) binds messenger RNAs (mRNAs) and translates the encoded message by selecting cognate aminoacyl-transfer RNA (tRNA) molecules. The large subunit (LSU) contains the ribosomal catalytic site termed the peptidyl transferase center (PTC), which catalyzes the formation of peptide bonds, thereby polymerizing the amino acids delivered by tRNAs into a polypeptide chain. The nascent polypeptides leave the ribosome through a tunnel in the LSU and interact with protein factors that function in enzymatic processing, targeting, and the membrane insertion of nascent chains at the exit of the ribosomal tunnel. This is Large ribosomal subunit protein eL8A from Candida albicans (strain SC5314 / ATCC MYA-2876) (Yeast).